Reading from the N-terminus, the 581-residue chain is Putative protein phosphatase 2C 22 (581 aa).

A signal peptide spans 1 to 21 (MVISVPLFSSVLLALVVAVPA). The PPM-type phosphatase domain occupies 102 to 478 (KYASSAMQGL…NNATAILVQF (377 aa)). Mn(2+)-binding residues include Asp-138, Gly-139, Asp-373, and Asn-469. The tract at residues 538–563 (SDEVAGGAAVAEQHQHNPEGGGEQQL) is disordered.

The protein belongs to the PP2C family. Mg(2+) serves as cofactor. It depends on Mn(2+) as a cofactor.

It carries out the reaction O-phospho-L-seryl-[protein] + H2O = L-seryl-[protein] + phosphate. It catalyses the reaction O-phospho-L-threonyl-[protein] + H2O = L-threonyl-[protein] + phosphate. The protein is Putative protein phosphatase 2C 22 of Oryza sativa subsp. japonica (Rice).